A 323-amino-acid chain; its full sequence is Mycothiol acetyltransferase (323 aa).

N-acetyltransferase domains follow at residues 5–145 and 168–323; these read LTTD…LPLR and VEIR…PEER. Position 36 (E36) interacts with 1D-myo-inositol 2-(L-cysteinylamino)-2-deoxy-alpha-D-glucopyranoside. 83 to 85 provides a ligand contact to acetyl-CoA; that stretch reads VAV. 3 residues coordinate 1D-myo-inositol 2-(L-cysteinylamino)-2-deoxy-alpha-D-glucopyranoside: E195, K236, and E252. Acetyl-CoA contacts are provided by residues 256-258 and 263-269; these read VGV and QGSGLGR. Y290 provides a ligand contact to 1D-myo-inositol 2-(L-cysteinylamino)-2-deoxy-alpha-D-glucopyranoside. 295–300 is an acetyl-CoA binding site; sequence NRPAVQ.

This sequence belongs to the acetyltransferase family. MshD subfamily. As to quaternary structure, monomer.

It catalyses the reaction 1D-myo-inositol 2-(L-cysteinylamino)-2-deoxy-alpha-D-glucopyranoside + acetyl-CoA = mycothiol + CoA + H(+). Its function is as follows. Catalyzes the transfer of acetyl from acetyl-CoA to desacetylmycothiol (Cys-GlcN-Ins) to form mycothiol. In Thermobifida fusca (strain YX), this protein is Mycothiol acetyltransferase.